Reading from the N-terminus, the 252-residue chain is Indole-3-glycerol phosphate synthase (252 aa).

The protein belongs to the TrpC family.

The catalysed reaction is 1-(2-carboxyphenylamino)-1-deoxy-D-ribulose 5-phosphate + H(+) = (1S,2R)-1-C-(indol-3-yl)glycerol 3-phosphate + CO2 + H2O. The protein operates within amino-acid biosynthesis; L-tryptophan biosynthesis; L-tryptophan from chorismate: step 4/5. The protein is Indole-3-glycerol phosphate synthase of Listeria monocytogenes serovar 1/2a (strain ATCC BAA-679 / EGD-e).